A 276-amino-acid polypeptide reads, in one-letter code: Hydroxyethylthiazole kinase (276 aa).

Met-48 contacts substrate. ATP contacts are provided by Arg-124 and Thr-175. Position 202 (Gly-202) interacts with substrate.

This sequence belongs to the Thz kinase family. Mg(2+) serves as cofactor.

It catalyses the reaction 5-(2-hydroxyethyl)-4-methylthiazole + ATP = 4-methyl-5-(2-phosphooxyethyl)-thiazole + ADP + H(+). Its pathway is cofactor biosynthesis; thiamine diphosphate biosynthesis; 4-methyl-5-(2-phosphoethyl)-thiazole from 5-(2-hydroxyethyl)-4-methylthiazole: step 1/1. Functionally, catalyzes the phosphorylation of the hydroxyl group of 4-methyl-5-beta-hydroxyethylthiazole (THZ). The polypeptide is Hydroxyethylthiazole kinase (Clostridium beijerinckii (strain ATCC 51743 / NCIMB 8052) (Clostridium acetobutylicum)).